The sequence spans 705 residues: MWLLYLLVPALFCRAGGSIPIPQKLFGEVTSPLFPKPYPNNFETTTVITVPTGYRVKLVFQQFDLEPSEGCFYDYVKISADKKSLGRFCGQLGSPLGNPPGKKEFMSQGNKMLLTFHTDFSNEENGTIMFYKGFLAYYQAVDLDECASRSKSGEEDPQPQCQHLCHNYVGGYFCSCRPGYELQEDTHSCQAECSSELYTEASGYISSLEYPRSYPPDLRCNYSIRVERGLTLHLKFLEPFDIDDHQQVHCPYDQLQIYANGKNIGEFCGKQRPPDLDTSSNAVDLLFFTDESGDSRGWKLRYTTEIIKCPQPKTLDEFTIIQNLQPQYQFRDYFIATCKQGYQLIEGNQVLHSFTAVCQDDGTWHRAMPRCKIKDCGQPRNLPNGDFRYTTTMGVNTYKARIQYYCHEPYYKMQTRAGSRESEQGVYTCTAQGIWKNEQKGEKIPRCLPVCGKPVNPVEQRQRIIGGQKAKMGNFPWQVFTNIHGRGGGALLGDRWILTAAHTLYPKEHEAQSNASLDVFLGHTNVEELMKLGNHPIRRVSVHPDYRQDESYNFEGDIALLELENSVTLGPNLLPICLPDNDTFYDLGLMGYVSGFGVMEEKIAHDLRFVRLPVANPQACENWLRGKNRMDVFSQNMFCAGHPSLKQDACQGDSGGVFAVRDPNTDRWVATGIVSWGIGCSRGYGFYTKVLNYVDWIKKEMEEED.

Residues 1-17 form the signal peptide; sequence MWLLYLLVPALFCRAGG. A CUB 1 domain is found at 18 to 141; sequence SIPIPQKLFG…KGFLAYYQAV (124 aa). Glu-66, Asp-74, and Asp-119 together coordinate Ca(2+). Cys-71 and Cys-89 are oxidised to a cystine. Asn-125 carries an N-linked (GlcNAc...) asparagine glycan. Ca(2+)-binding residues include Asp-142, Leu-143, and Glu-145. An EGF-like; calcium-binding domain is found at 142–190; that stretch reads DLDECASRSKSGEEDPQPQCQHLCHNYVGGYFCSCRPGYELQEDTHSCQ. Intrachain disulfides connect Cys-146/Cys-165, Cys-161/Cys-174, Cys-176/Cys-189, and Cys-193/Cys-220. Asn-167, Tyr-168, and Gly-171 together coordinate Ca(2+). Residue Asn-167 is modified to (3R)-3-hydroxyasparagine. One can recognise a CUB 2 domain in the interval 193–305; it reads CSSELYTEAS…RGWKLRYTTE (113 aa). At Ser-206 the chain carries Phosphoserine; by CK2. Asn-221 is a glycosylation site (N-linked (GlcNAc...) asparagine). Asp-243, Asp-253, Asp-290, and Asp-294 together coordinate Ca(2+). A disulfide bridge links Cys-250 with Cys-268. Sushi domains are found at residues 307–373 and 374–449; these read IKCP…RCKI and KDCG…RCLP. 5 cysteine pairs are disulfide-bonded: Cys-309–Cys-358, Cys-338–Cys-371, Cys-376–Cys-429, Cys-406–Cys-447, and Cys-451–Cys-577. Residues 464–702 enclose the Peptidase S1 domain; that stretch reads IIGGQKAKMG…YVDWIKKEME (239 aa). His-502 (charge relay system) is an active-site residue. Asn-514 carries N-linked (GlcNAc...) asparagine glycosylation. The Charge relay system role is filled by Asp-557. A glycan (N-linked (GlcNAc...) asparagine) is linked at Asn-581. 2 disulfide bridges follow: Cys-620–Cys-639 and Cys-650–Cys-680. The active-site Charge relay system is Ser-654.

The protein belongs to the peptidase S1 family. Core component of the complement C1 complex, a calcium-dependent complex composed of 1 molecule of the C1Q subcomplex, 2 molecules of C1R and 2 molecules of C1S. The C1Q subcomplex is composed 18 subunits: 3 chains of C1QA, C1QB, and C1QC trimerize to form 6 collagen-like triple helices connected to six globular ligand-recognition modules. Within the C1 complex, C1R is a dimer of identical chains, each of which is activated by cleavage into two chains, heavy and light, connected by disulfide bonds. Post-translationally, cleaved and activated by autocatalytic processing to generate Complement C1r subcomponent heavy and light chains that are connected by disulfide bonds. In terms of processing, the iron and 2-oxoglutarate dependent 3-hydroxylation of aspartate and asparagine is (R) stereospecific within EGF domains.

Its subcellular location is the secreted. The protein resides in the cell surface. It catalyses the reaction Selective cleavage of Lys(or Arg)-|-Ile bond in complement subcomponent C1s to form the active form of C1s (EC 3.4.21.42).. With respect to regulation, activated by the C1Q subcomplex of the C1 complex following C1Q binding to immunoglobulins (IgG or IgM) complexed with antigens to form antigen-antibody complexes on the surface of pathogens. Immunoglobulin-binding promotes autoactivation of C1R, which results in the cleavage of the Arg-Ile bond in the catalytic domain. Functionally, serine protease component of the complement C1 complex, a multiprotein complex that initiates the classical pathway of the complement system, a cascade of proteins that leads to phagocytosis and breakdown of pathogens and signaling that strengthens the adaptive immune system. C1R catalyzes the first enzymatic step in the classical complement pathway: it is activated by the C1Q subcomplex of the C1 complex, which associates with IgG or IgM immunoglobulins complexed with antigens to form antigen-antibody complexes on the surface of pathogens. Immunoglobulin-binding promotes the autocatalytic cleavage and activation of C1R. Activated C1R then cleaves and activates C1S, the second protease of the classical complement pathway. It is unclear if C1R activates C1S within single, strained C1 complexes or between neighboring C1 complexes on surfaces. The sequence is that of Complement C1r subcomponent from Homo sapiens (Human).